We begin with the raw amino-acid sequence, 102 residues long: Integration host factor subunit alpha (102 aa).

The segment at 49–70 (FGNFQLRTKPQRPGRNPKTGEE) is disordered.

It belongs to the bacterial histone-like protein family. In terms of assembly, heterodimer of an alpha and a beta chain.

This protein is one of the two subunits of integration host factor, a specific DNA-binding protein that functions in genetic recombination as well as in transcriptional and translational control. This Nitrosomonas europaea (strain ATCC 19718 / CIP 103999 / KCTC 2705 / NBRC 14298) protein is Integration host factor subunit alpha.